A 925-amino-acid chain; its full sequence is Ubp5-interacting protein ftp105 (925 aa).

Over residues 650–664 (EGSSDFESKSSDNTS) the composition is skewed to low complexity. The segment at 650 to 671 (EGSSDFESKSSDNTSLDGTPLQ) is disordered.

This sequence belongs to the hid-1 family. In terms of assembly, interacts with ubp5.

It localises to the cytoplasm. It is found in the golgi apparatus. Its function is as follows. Required for the localization of ubp5 to the Golgi apparatus. Involved in detoxification of cadmium ion. The sequence is that of Ubp5-interacting protein ftp105 (ftp105) from Schizosaccharomyces pombe (strain 972 / ATCC 24843) (Fission yeast).